The following is a 96-amino-acid chain: NADH-ubiquinone oxidoreductase chain 4L (96 aa).

The next 3 helical transmembrane spans lie at 1 to 21 (MNPT…AFYQ), 24 to 44 (LLSL…LMAI), and 57 to 77 (LPLI…VLLV).

Belongs to the complex I subunit 4L family.

The protein localises to the mitochondrion membrane. The enzyme catalyses a ubiquinone + NADH + 5 H(+)(in) = a ubiquinol + NAD(+) + 4 H(+)(out). Core subunit of the mitochondrial membrane respiratory chain NADH dehydrogenase (Complex I) which catalyzes electron transfer from NADH through the respiratory chain, using ubiquinone as an electron acceptor. Part of the enzyme membrane arm which is embedded in the lipid bilayer and involved in proton translocation. This is NADH-ubiquinone oxidoreductase chain 4L (MT-ND4L) from Myxine glutinosa (Atlantic hagfish).